A 22-amino-acid polypeptide reads, in one-letter code: NADH-ubiquinone oxidoreductase 16 kDa subunit (22 aa).

In terms of assembly, complex I is composed of about 45 different subunits.

It localises to the mitochondrion inner membrane. The enzyme catalyses a ubiquinone + NADH + 5 H(+)(in) = a ubiquinol + NAD(+) + 4 H(+)(out). Its function is as follows. Transfer of electrons from NADH to the respiratory chain. The immediate electron acceptor for the enzyme is believed to be ubiquinone. This chain is NADH-ubiquinone oxidoreductase 16 kDa subunit, found in Solanum tuberosum (Potato).